We begin with the raw amino-acid sequence, 150 residues long: uncharacterized protein (150 aa).

This is an uncharacterized protein from Bacillus subtilis (strain 168).